Here is a 265-residue protein sequence, read N- to C-terminus: Speedy protein E12 (265 aa).

A disordered region spans residues 1-80; sequence MGQILGKIMM…EPEKELAPEP (80 aa). The segment covering 13–23 has biased composition (low complexity); the sequence is QPQPQEEQSPQ. Residues 66-80 show a composition bias toward acidic residues; sequence DESDDEPEKELAPEP.

It belongs to the Speedy/Ringo family.

This chain is Speedy protein E12, found in Homo sapiens (Human).